The following is a 231-amino-acid chain: 5'-methylthioadenosine/S-adenosylhomocysteine nucleosidase (231 aa).

Catalysis depends on E12, which acts as the Proton acceptor. Residues G78, V153, and 174–175 (ME) contribute to the substrate site. The Proton donor role is filled by D198.

The protein belongs to the PNP/UDP phosphorylase family. MtnN subfamily.

It catalyses the reaction S-adenosyl-L-homocysteine + H2O = S-(5-deoxy-D-ribos-5-yl)-L-homocysteine + adenine. The catalysed reaction is S-methyl-5'-thioadenosine + H2O = 5-(methylsulfanyl)-D-ribose + adenine. The enzyme catalyses 5'-deoxyadenosine + H2O = 5-deoxy-D-ribose + adenine. Its pathway is amino-acid biosynthesis; L-methionine biosynthesis via salvage pathway; S-methyl-5-thio-alpha-D-ribose 1-phosphate from S-methyl-5'-thioadenosine (hydrolase route): step 1/2. Its function is as follows. Catalyzes the irreversible cleavage of the glycosidic bond in both 5'-methylthioadenosine (MTA) and S-adenosylhomocysteine (SAH/AdoHcy) to adenine and the corresponding thioribose, 5'-methylthioribose and S-ribosylhomocysteine, respectively. Also cleaves 5'-deoxyadenosine, a toxic by-product of radical S-adenosylmethionine (SAM) enzymes, into 5-deoxyribose and adenine. This is 5'-methylthioadenosine/S-adenosylhomocysteine nucleosidase from Vibrio campbellii (strain ATCC BAA-1116).